The following is a 443-amino-acid chain: Signal recognition particle 54 kDa protein (443 aa).

GTP is bound by residues 107–114, 189–193, and 247–250; these read GVQGSGKT, DTAGR, and TKLD.

It belongs to the GTP-binding SRP family. SRP54 subfamily. As to quaternary structure, part of the signal recognition particle protein translocation system, which is composed of SRP and FtsY. Archaeal SRP consists of a 7S RNA molecule of 300 nucleotides and two protein subunits: SRP54 and SRP19.

The protein resides in the cytoplasm. The catalysed reaction is GTP + H2O = GDP + phosphate + H(+). Involved in targeting and insertion of nascent membrane proteins into the cytoplasmic membrane. Binds to the hydrophobic signal sequence of the ribosome-nascent chain (RNC) as it emerges from the ribosomes. The SRP-RNC complex is then targeted to the cytoplasmic membrane where it interacts with the SRP receptor FtsY. In Pyrococcus horikoshii (strain ATCC 700860 / DSM 12428 / JCM 9974 / NBRC 100139 / OT-3), this protein is Signal recognition particle 54 kDa protein.